The primary structure comprises 243 residues: tRNA pseudouridine synthase A (243 aa).

Residue aspartate 51 is the Nucleophile of the active site. A substrate-binding site is contributed by tyrosine 111.

The protein belongs to the tRNA pseudouridine synthase TruA family. In terms of assembly, homodimer.

The catalysed reaction is uridine(38/39/40) in tRNA = pseudouridine(38/39/40) in tRNA. Its function is as follows. Formation of pseudouridine at positions 38, 39 and 40 in the anticodon stem and loop of transfer RNAs. This is tRNA pseudouridine synthase A from Neorickettsia sennetsu (strain ATCC VR-367 / Miyayama) (Ehrlichia sennetsu).